The primary structure comprises 275 residues: Homeobox protein Hox-C12a (275 aa).

Disordered regions lie at residues 101–129 (SREN…DHGM) and 148–213 (QLTQ…KRKP). A compositionally biased stretch (low complexity) spans 155–177 (SCQSMESDSSSSLLNEASKPSSS). Positions 178-194 (DTQTLVSPGSHTGTITA) are enriched in polar residues. The homeobox DNA-binding region spans 207-266 (TRKKRKPYSKLQLAELEGEFMMNEFITRQRRRELSDRLNLSDQQVKIWFQNRRMKKKRLM).

Belongs to the Abd-B homeobox family.

Its subcellular location is the nucleus. Its function is as follows. Sequence-specific transcription factor which is part of a developmental regulatory system that provides cells with specific positional identities on the anterior-posterior axis. The polypeptide is Homeobox protein Hox-C12a (hoxc12a) (Takifugu rubripes (Japanese pufferfish)).